Here is a 580-residue protein sequence, read N- to C-terminus: Glutathione hydrolase proenzyme (580 aa).

Positions 1–25 (MIKPTFLRRVAIAALLSGSCFSAAA) are cleaved as a signal peptide. An L-glutamate-binding site is contributed by Arg114. The active-site Nucleophile is Thr391. Residues Thr409, Asn411, Gln430, Asp433, 462-463 (SS), and 483-484 (GG) each bind L-glutamate. The interval 561–580 (DGELYGASDPRSVDDLTAGY) is disordered.

Belongs to the gamma-glutamyltransferase family. This enzyme consists of two polypeptide chains, which are synthesized in precursor form from a single polypeptide. Cleaved by autocatalysis into a large and a small subunit.

The protein resides in the periplasm. The catalysed reaction is an N-terminal (5-L-glutamyl)-[peptide] + an alpha-amino acid = 5-L-glutamyl amino acid + an N-terminal L-alpha-aminoacyl-[peptide]. It catalyses the reaction glutathione + H2O = L-cysteinylglycine + L-glutamate. It carries out the reaction an S-substituted glutathione + H2O = an S-substituted L-cysteinylglycine + L-glutamate. It functions in the pathway sulfur metabolism; glutathione metabolism. Transferase and hydrolase activities are inhibited by L-Ala and L-Gln, and also by GGT affinity labeling reagents such as azaserine and 6-diazo-5-oxo-nor-leucine. In terms of biological role, cleaves the gamma-glutamyl bond of periplasmic glutathione (gamma-Glu-Cys-Gly), glutathione conjugates, and other gamma-glutamyl compounds. The metabolism of glutathione releases free glutamate and the dipeptide cysteinyl-glycine, which is hydrolyzed to cysteine and glycine by dipeptidases; it may function in amino acid uptake/salvage, or possibly in peptidoglycan linkage. Catalyzes the hydrolysis and transpeptidation of many gamma-glutamyl compounds (including some D-gamma-glutamyl substrates), with a preference for basic and aromatic amino acids as acceptors. The KM values for gamma-glutamyl acceptors are so high that it has been proposed transpeptidation is not the physiological role in E.coli. This Escherichia coli (strain K12) protein is Glutathione hydrolase proenzyme (ggt).